We begin with the raw amino-acid sequence, 377 residues long: DNA replication and repair protein RecF (377 aa).

Gly-30–Thr-37 is an ATP binding site.

The protein belongs to the RecF family.

Its subcellular location is the cytoplasm. The RecF protein is involved in DNA metabolism; it is required for DNA replication and normal SOS inducibility. RecF binds preferentially to single-stranded, linear DNA. It also seems to bind ATP. This Salinispora tropica (strain ATCC BAA-916 / DSM 44818 / JCM 13857 / NBRC 105044 / CNB-440) protein is DNA replication and repair protein RecF.